A 408-amino-acid chain; its full sequence is Multidrug resistance protein MdtG (408 aa).

A run of 11 helical transmembrane segments spans residues 16–36 (LIVA…VMPF), 58–78 (IVFS…GGLA), 92–112 (LGMG…QFLI), 115–135 (ALLG…ATQV), 146–166 (TLST…GLLA), 173–193 (PVFF…LFCI), 224–244 (LFVT…ILTL), 256–276 (VAFI…LSAP), 290–310 (ILIT…YVQT), 319–339 (FLLG…LVYN), and 378–398 (AVFL…WNSL).

This sequence belongs to the major facilitator superfamily. DHA1 family. MdtG (TC 2.A.1.2.20) subfamily.

The protein localises to the cell inner membrane. In terms of biological role, confers resistance to fosfomycin and deoxycholate. The chain is Multidrug resistance protein MdtG from Escherichia coli O6:K15:H31 (strain 536 / UPEC).